A 618-amino-acid polypeptide reads, in one-letter code: DNA ligase 2 (618 aa).

Basic and acidic residues predominate over residues 197–208; it reads DKKTLESREDAK. Residues 197 to 250 form a disordered region; the sequence is DKKTLESREDAKSVPPASQPEITNKISGDTSPNTSESVQTKKSDPDTSSNVDPS. Over residues 216–234 the composition is skewed to polar residues; sequence PEITNKISGDTSPNTSESV. Glutamate 312 lines the ATP pocket. The active-site N6-AMP-lysine intermediate is the lysine 314. 6 residues coordinate ATP: arginine 319, arginine 334, glutamate 363, phenylalanine 403, arginine 476, and lysine 482. The interval 459–480 is disordered; sequence HEGVMLKDPDSTYNPGSRGQHW.

Belongs to the ATP-dependent DNA ligase family. It depends on Mg(2+) as a cofactor.

The catalysed reaction is ATP + (deoxyribonucleotide)n-3'-hydroxyl + 5'-phospho-(deoxyribonucleotide)m = (deoxyribonucleotide)n+m + AMP + diphosphate.. Its function is as follows. DNA ligase that seals nicks in double-stranded DNA during DNA replication, DNA recombination and DNA repair. This Haloquadratum walsbyi (strain DSM 16790 / HBSQ001) protein is DNA ligase 2.